A 362-amino-acid chain; its full sequence is Golgi-resident adenosine 3',5'-bisphosphate 3'-phosphatase (362 aa).

The residue at position 1 (Met1) is an N-acetylmethionine. Over 1–12 the chain is Cytoplasmic; sequence MAPMGIRLSPLG. Residues 13 to 33 form a helical membrane-spanning segment; the sequence is VAVFCLLGLGVLYHLYSGFLA. Over 34-362 the chain is Lumenal; it reads GRFSLFGLGG…LPDLEKTGHK (329 aa). The interval 88-109 is disordered; sequence RESNVLHEKSKGKTREGADDKM. Asp113 serves as the catalytic Proton acceptor. Residues Glu136, Asp177, Leu179, and Asp180 each coordinate Mg(2+). Thr182 (proton acceptor) is an active-site residue. Residues Ser245 and His248 each coordinate AMP. N-linked (GlcNAc...) asparagine glycosylation occurs at Asn262. The AMP site is built by Gly271 and Lys275. Asp303 contacts Mg(2+).

This sequence belongs to the inositol monophosphatase superfamily. Mg(2+) is required as a cofactor. In terms of processing, contains N-linked glycan resistant to endoglycosydase H.

Its subcellular location is the golgi apparatus. The protein resides in the trans-Golgi network membrane. It catalyses the reaction adenosine 3',5'-bisphosphate + H2O = AMP + phosphate. Its pathway is sulfur metabolism. With respect to regulation, strongly inhibited by lithium. Exhibits 3'-nucleotidase activity toward adenosine 3',5'-bisphosphate (PAP), namely hydrolyzes adenosine 3',5'-bisphosphate into adenosine 5'-monophosphate (AMP) and a phosphate. May play a role in the formation of skeletal elements derived through endochondral ossification, possibly by clearing adenosine 3',5'-bisphosphate produced by Golgi sulfotransferases during glycosaminoglycan sulfation. Has no activity toward 3'-phosphoadenosine 5'-phosphosulfate (PAPS) or inositol phosphate (IP) substrates including I(1)P, I(1,4)P2, I(1,3,4)P3, I(1,4,5)P3 and I(1,3,4,5)P4. This chain is Golgi-resident adenosine 3',5'-bisphosphate 3'-phosphatase (BPNT2), found in Bos taurus (Bovine).